Here is a 316-residue protein sequence, read N- to C-terminus: uncharacterized protein (316 aa).

4 BNR repeats span residues 62–73 (FISDSQGLKFSP), 124–135 (KISVDNGLTWSN), 196–207 (FISRDGGLTWRV), and 242–253 (YFSLDQGRTWNQ).

This is an uncharacterized protein from Saccharomyces cerevisiae (strain ATCC 204508 / S288c) (Baker's yeast).